The primary structure comprises 408 residues: RUN domain-containing protein 3B (408 aa).

Residues 1–25 (MASRSLGGLSGSRGGGGGGGGKKSL) are disordered. The segment covering 8–22 (GLSGSRGGGGGGGGK) has biased composition (gly residues). An Omega-N-methylarginine modification is found at Arg-13. The RUN domain maps to 58-190 (DDSSPEFNNF…IDFSFCLKGE (133 aa)). The segment at 213–238 (DSISSDEEELRTFGSSDSESSTPENV) is disordered. 2 positions are modified to phosphoserine: Ser-216 and Ser-217. A compositionally biased stretch (polar residues) spans 225–236 (FGSSDSESSTPE). The stretch at 301–326 (AHKLEKEQLEYIIVELQDQLKSYQSL) forms a coiled coil. The interval 337–359 (QASLDPSHSQEGDGKQDSLNFIG) is disordered.

It belongs to the RUNDC3 family. In terms of assembly, interacts with RAP2A.

The sequence is that of RUN domain-containing protein 3B (Rundc3b) from Mus musculus (Mouse).